Consider the following 237-residue polypeptide: Ditrans,polycis-undecaprenyl-diphosphate synthase ((2E,6E)-farnesyl-diphosphate specific) (237 aa).

Aspartate 11 is a catalytic residue. A Mg(2+)-binding site is contributed by aspartate 11. Residues 12–15 (GNGR), tryptophan 16, arginine 24, histidine 28, and 56–58 (SIE) contribute to the substrate site. Asparagine 59 functions as the Proton acceptor in the catalytic mechanism. Substrate contacts are provided by residues arginine 62, arginine 179, and 185–187 (RLS). Glutamate 198 is a binding site for Mg(2+).

Belongs to the UPP synthase family. In terms of assembly, homodimer. Mg(2+) serves as cofactor.

It catalyses the reaction 8 isopentenyl diphosphate + (2E,6E)-farnesyl diphosphate = di-trans,octa-cis-undecaprenyl diphosphate + 8 diphosphate. Functionally, catalyzes the sequential condensation of isopentenyl diphosphate (IPP) with (2E,6E)-farnesyl diphosphate (E,E-FPP) to yield (2Z,6Z,10Z,14Z,18Z,22Z,26Z,30Z,34E,38E)-undecaprenyl diphosphate (di-trans,octa-cis-UPP). UPP is the precursor of glycosyl carrier lipid in the biosynthesis of bacterial cell wall polysaccharide components such as peptidoglycan and lipopolysaccharide. The sequence is that of Ditrans,polycis-undecaprenyl-diphosphate synthase ((2E,6E)-farnesyl-diphosphate specific) from Coxiella burnetii (strain RSA 493 / Nine Mile phase I).